The sequence spans 90 residues: Putative defensin-like protein 64 (90 aa).

The first 23 residues, 1-23 (MWGRQIVLKIFFLVLSCVIVIET), serve as a signal peptide directing secretion. Disulfide bonds link cysteine 33–cysteine 56 and cysteine 42–cysteine 77.

This sequence belongs to the DEFL family.

Its subcellular location is the secreted. This Arabidopsis thaliana (Mouse-ear cress) protein is Putative defensin-like protein 64.